The sequence spans 211 residues: tRNA (guanine-N(7)-)-methyltransferase (211 aa).

Residues E43, E68, D95, and D117 each contribute to the S-adenosyl-L-methionine site. D117 is an active-site residue. Substrate is bound by residues K121, D153, and 190–193 (TEYE).

It belongs to the class I-like SAM-binding methyltransferase superfamily. TrmB family.

It carries out the reaction guanosine(46) in tRNA + S-adenosyl-L-methionine = N(7)-methylguanosine(46) in tRNA + S-adenosyl-L-homocysteine. Its pathway is tRNA modification; N(7)-methylguanine-tRNA biosynthesis. Functionally, catalyzes the formation of N(7)-methylguanine at position 46 (m7G46) in tRNA. The polypeptide is tRNA (guanine-N(7)-)-methyltransferase (Staphylococcus carnosus (strain TM300)).